A 455-amino-acid chain; its full sequence is Golgi pH regulator A (455 aa).

Helical transmembrane passes span 5–25, 46–66, 79–99, 114–134, and 150–170; these read IDSS…WLFF, VTFA…LGVL, LCVI…YFIV, CLLW…FPIL, and VGVI…VNCP. N-linked (GlcNAc...) asparagine glycans are attached at residues Asn180 and Asn243. Transmembrane regions (helical) follow at residues 290 to 310, 343 to 363, 378 to 398, and 425 to 445; these read GYFF…NIVF, ISFI…LITL, VIVL…VLLI, and WFDV…YLAH.

The protein belongs to the Golgi pH regulator (TC 1.A.38) family. Homotrimer. Interacts with RABL3; the interaction stabilizes GPR89A. As to expression, ubiquitous.

The protein localises to the golgi apparatus membrane. It carries out the reaction iodide(out) = iodide(in). The enzyme catalyses chloride(in) = chloride(out). The catalysed reaction is bromide(in) = bromide(out). It catalyses the reaction fluoride(in) = fluoride(out). Voltage-gated channel that enables the transfer of monoatomic anions such as iodide, chloride, bromide and fluoride which may function in counter-ion conductance and participates in Golgi acidification. Plays a role in lymphocyte development, probably by acting as a RABL3 effector in hematopoietic cells. The polypeptide is Golgi pH regulator A (Homo sapiens (Human)).